The sequence spans 523 residues: Maturase K (523 aa).

It belongs to the intron maturase 2 family. MatK subfamily.

The protein localises to the plastid. It localises to the chloroplast. In terms of biological role, usually encoded in the trnK tRNA gene intron. Probably assists in splicing its own and other chloroplast group II introns. The polypeptide is Maturase K (Asphodeline lutea (King's spear)).